An 802-amino-acid polypeptide reads, in one-letter code: Acetyl-CoA decarbonylase/synthase complex subunit alpha 1 (802 aa).

4 residues coordinate [4Fe-4S] cluster: C68, C71, C76, and C86. H109 contributes to the CO binding site. 3 residues coordinate [Ni-4Fe-4S] cluster: H243, C271, and C310. 2 4Fe-4S ferredoxin-type domains span residues 395-424 (DEAL…VDQG) and 435-464 (SKLA…INVI). [4Fe-4S] cluster is bound by residues C405, C408, C411, C415, C444, C447, C450, and C454. Positions 512, 541, and 576 each coordinate [Ni-4Fe-4S] cluster.

This sequence belongs to the Ni-containing carbon monoxide dehydrogenase family. As to quaternary structure, heterotetramer of two alpha and two epsilon subunits. The ACDS complex is made up of alpha, epsilon, beta, gamma and delta subunits with a probable stoichiometry of (alpha(2)epsilon(2))(4)-beta(8)-(gamma(1)delta(1))(8). Requires [4Fe-4S] cluster as cofactor. The cofactor is [Ni-4Fe-4S] cluster.

It carries out the reaction CO + 2 oxidized [2Fe-2S]-[ferredoxin] + H2O = 2 reduced [2Fe-2S]-[ferredoxin] + CO2 + 2 H(+). Functionally, part of the ACDS complex that catalyzes the reversible cleavage of acetyl-CoA, allowing autotrophic growth from CO(2). The alpha-epsilon subcomponent functions as a carbon monoxide dehydrogenase. The polypeptide is Acetyl-CoA decarbonylase/synthase complex subunit alpha 1 (Archaeoglobus fulgidus (strain ATCC 49558 / DSM 4304 / JCM 9628 / NBRC 100126 / VC-16)).